The following is a 236-amino-acid chain: Uridylate kinase (236 aa).

10 to 13 contacts ATP; the sequence is KLSG. Gly52 lines the UMP pocket. ATP contacts are provided by Gly53 and Arg57. Residues Asp72 and 133–140 contribute to the UMP site; that span reads TGNPFFTT. The ATP site is built by Thr160, Tyr166, and Asp169.

This sequence belongs to the UMP kinase family. In terms of assembly, homohexamer.

Its subcellular location is the cytoplasm. The enzyme catalyses UMP + ATP = UDP + ADP. The protein operates within pyrimidine metabolism; CTP biosynthesis via de novo pathway; UDP from UMP (UMPK route): step 1/1. Its activity is regulated as follows. Inhibited by UTP. Functionally, catalyzes the reversible phosphorylation of UMP to UDP. This Bacteroides thetaiotaomicron (strain ATCC 29148 / DSM 2079 / JCM 5827 / CCUG 10774 / NCTC 10582 / VPI-5482 / E50) protein is Uridylate kinase.